The sequence spans 554 residues: Glucose-6-phosphate isomerase (554 aa).

Glu359 serves as the catalytic Proton donor. Catalysis depends on residues His390 and Lys518.

It belongs to the GPI family.

Its subcellular location is the cytoplasm. It catalyses the reaction alpha-D-glucose 6-phosphate = beta-D-fructose 6-phosphate. Its pathway is carbohydrate biosynthesis; gluconeogenesis. It participates in carbohydrate degradation; glycolysis; D-glyceraldehyde 3-phosphate and glycerone phosphate from D-glucose: step 2/4. Its function is as follows. Catalyzes the reversible isomerization of glucose-6-phosphate to fructose-6-phosphate. The sequence is that of Glucose-6-phosphate isomerase from Pseudomonas syringae pv. syringae (strain B728a).